Here is a 117-residue protein sequence, read N- to C-terminus: Large ribosomal subunit protein bL20c (117 aa).

It belongs to the bacterial ribosomal protein bL20 family.

It localises to the plastid. The protein localises to the chloroplast. In terms of biological role, binds directly to 23S ribosomal RNA and is necessary for the in vitro assembly process of the 50S ribosomal subunit. It is not involved in the protein synthesizing functions of that subunit. In Nasturtium officinale (Watercress), this protein is Large ribosomal subunit protein bL20c.